Here is a 374-residue protein sequence, read N- to C-terminus: Outer membrane protein assembly factor BamC (374 aa).

A signal peptide spans 1–22; that stretch reads MSKFYKSGRVTTAVIVALSLSA. Cys-23 carries N-palmitoyl cysteine lipidation. Residue Cys-23 is the site of S-diacylglycerol cysteine attachment.

It belongs to the BamC family. As to quaternary structure, part of the Bam complex.

Its subcellular location is the cell outer membrane. Its function is as follows. Part of the outer membrane protein assembly complex, which is involved in assembly and insertion of beta-barrel proteins into the outer membrane. In Psychromonas ingrahamii (strain DSM 17664 / CCUG 51855 / 37), this protein is Outer membrane protein assembly factor BamC.